Consider the following 338-residue polypeptide: Homeobox protein ceh-20 (338 aa).

Positions 4–187 (THPANLSELL…VMILRSRFLD (184 aa)) constitute a PBC domain. Residues 11 to 91 (ELLDAVLKIN…EGVAGPDKGG (81 aa)) are PBC-A. The segment at 94 to 187 (GSDASGGDQA…VMILRSRFLD (94 aa)) is PBC-B. Residues 188–250 (ARRKRRNFSK…NKRIRYKKNM (63 aa)) constitute a DNA-binding region (homeobox; TALE-type).

It belongs to the TALE/PBX homeobox family. As to quaternary structure, interacts with Meis protein psa-3. Interacts with homeobox protein nob-1. Expressed in head dopaminergic neurons.

The protein localises to the nucleus. Its function is as follows. Transcription factor that binds to the 5'-TGATNNAT(G/T)(G/A)-3' PBC/Hox lineage enhancer region of sem-2 to promote cell fate specification in the postembryonic mesoderm (also known as the M lineage). Required for the M lineage-specific expression of the transcription factor, mls-2. Required for asymmetric division of the T hypodermal cell, probably acting via the regulation of asymmetric expression of Meis protein psa-3 in concert with homeobox protein nob-1 and the Wnt-MAPK pathway. Has a role in the mig-13 pathway to promote the guidance, migration and positioning of Q neuroblasts and their descendants along the anteroposterior body axis and the anterior migration of BDU interneurons. Also required for normal vulval formation. Plays a role in regulating gene expression in dopaminergic neurons, acting in midbody PDE neurons, and acting redundantly with ceh-40 in head neurons. May activate dopamine pathway genes in concert with ETS domain-containing protein ast-1, and homeobox proteins ceh-43 and ceh-40. The polypeptide is Homeobox protein ceh-20 (Caenorhabditis elegans).